A 307-amino-acid chain; its full sequence is MGVTIEKLIKDFSLEVIQIGEENVPINVSDVNRPGLQLAGFYNYFAPERIQVIGKAEWSFLEDMSPDLRKKRLNKFFSFDISCLIITRGLEIHEELLKAARKRNLWILRSDMVTTKFISKITMYLSDKMAPETRLHGVLVDVYGIGMLITGESGIGKSETALELIKRGHRLVTDDAVDIKEIDGDLIGRSPEITFGMLEVRGMGIIDVSALYGLSSILNSKQIKIIIHFEHWKDDGDYDRLGVNDEYQDILGVKVKKLRVPIRPGRNIAVIIEAAAANYRYQRMSDISPVDIIEKRMLESMEKESKI.

Active-site residues include His136 and Lys157. Residue 151–158 (GESGIGKS) participates in ATP binding. Ser158 serves as a coordination point for Mg(2+). Residue Asp175 is the Proton acceptor; for phosphorylation activity. Proton donor; for dephosphorylation activity of the active site. The important for the catalytic mechanism of both phosphorylation and dephosphorylation stretch occupies residues 198-207 (LEVRGMGIID). Glu199 provides a ligand contact to Mg(2+). Arg240 is a catalytic residue. Residues 261 to 266 (PIRPGR) are important for the catalytic mechanism of dephosphorylation.

This sequence belongs to the HPrK/P family. As to quaternary structure, homohexamer. The cofactor is Mg(2+).

The enzyme catalyses [HPr protein]-L-serine + ATP = [HPr protein]-O-phospho-L-serine + ADP + H(+). It carries out the reaction [HPr protein]-O-phospho-L-serine + phosphate + H(+) = [HPr protein]-L-serine + diphosphate. Catalyzes the ATP- as well as the pyrophosphate-dependent phosphorylation of a specific serine residue in HPr, a phosphocarrier protein of the phosphoenolpyruvate-dependent sugar phosphotransferase system (PTS). HprK/P also catalyzes the pyrophosphate-producing, inorganic phosphate-dependent dephosphorylation (phosphorolysis) of seryl-phosphorylated HPr (P-Ser-HPr). The two antagonistic activities of HprK/P are regulated by several intracellular metabolites, which change their concentration in response to the absence or presence of rapidly metabolisable carbon sources (glucose, fructose, etc.) in the growth medium. Therefore, by controlling the phosphorylation state of HPr, HPrK/P is a sensor enzyme that plays a major role in the regulation of carbon metabolism and sugar transport: it mediates carbon catabolite repression (CCR), and regulates PTS-catalyzed carbohydrate uptake and inducer exclusion. The chain is HPr kinase/phosphorylase from Clostridium perfringens (strain 13 / Type A).